Consider the following 397-residue polypeptide: Serpin B10 (397 aa).

The Nuclear localization signal motif lies at 74–77 (KKRK).

The protein belongs to the serpin family. Ov-serpin subfamily.

The protein localises to the nucleus. It is found in the cytoplasm. Functionally, protease inhibitor that may play a role in the regulation of protease activities during hematopoiesis and apoptosis induced by TNF. May regulate protease activities in the cytoplasm and in the nucleus. The polypeptide is Serpin B10 (SERPINB10) (Sorex araneus (Eurasian common shrew)).